We begin with the raw amino-acid sequence, 352 residues long: Ion-translocating oxidoreductase complex subunit D (352 aa).

4 helical membrane-spanning segments follow: residues 20–40 (IMLLVLLAAVPGIAAQLCFFG), 42–62 (GTLVQILLASVSALLAEALVL), 89–109 (IPPLAPWWMVVLGTVFAVIIA), and 123–143 (PAMIGYVVLLISFPVQMTSWL). FMN phosphoryl threonine is present on Thr187. Transmembrane regions (helical) follow at residues 215 to 235 (LAGAGWQWVNLAWLAGGVWLL), 242 to 262 (WHIPLSFLVTLALCATLGWLF), 267 to 287 (LAAPQIHLLSGATMLGAFFIL), 301 to 321 (LIFGALAGLLVWLIRSFGGYP), and 322 to 342 (DGVAFAVLLANITVPLIDYYT).

Belongs to the NqrB/RnfD family. The complex is composed of six subunits: RsxA, RsxB, RsxC, RsxD, RsxE and RsxG. FMN serves as cofactor.

The protein resides in the cell inner membrane. In terms of biological role, part of a membrane-bound complex that couples electron transfer with translocation of ions across the membrane. Required to maintain the reduced state of SoxR. This is Ion-translocating oxidoreductase complex subunit D from Escherichia coli O7:K1 (strain IAI39 / ExPEC).